Consider the following 104-residue polypeptide: Iron-sulfur cluster assembly protein CyaY (104 aa).

It belongs to the frataxin family.

In terms of biological role, involved in iron-sulfur (Fe-S) cluster assembly. May act as a regulator of Fe-S biogenesis. In Aeromonas hydrophila subsp. hydrophila (strain ATCC 7966 / DSM 30187 / BCRC 13018 / CCUG 14551 / JCM 1027 / KCTC 2358 / NCIMB 9240 / NCTC 8049), this protein is Iron-sulfur cluster assembly protein CyaY.